Here is a 321-residue protein sequence, read N- to C-terminus: Phosphatidylglycerol phospholipase C (321 aa).

In terms of domain architecture, GP-PDE spans 2 to 251 (VEIVGHRAFK…DDPIKARKLC (250 aa)). Residues 297 to 315 (WVHIKLCGWSIAYVIFLFL) traverse the membrane as a helical; Anchor for type IV membrane protein segment.

It belongs to the glycerophosphoryl diester phosphodiesterase family.

Its subcellular location is the mitochondrion membrane. It localises to the lipid droplet. It carries out the reaction a 1,2-diacyl-sn-glycero-3-phospho-(1'-sn-glycerol) + H2O = sn-glycerol 3-phosphate + a 1,2-diacyl-sn-glycerol + H(+). Its function is as follows. Phosphatidylglycerol phospholipase required for the removal of excess phosphatidylglycerol (PG) via a phospholipase C-type degradation mechanism. This is Phosphatidylglycerol phospholipase C (PGC1) from Saccharomyces cerevisiae (strain ATCC 204508 / S288c) (Baker's yeast).